We begin with the raw amino-acid sequence, 525 residues long: Chromaffin granule amine transporter (525 aa).

The Cytoplasmic portion of the chain corresponds to 1 to 21; sequence MLRTILDAPQRLLKEGRASRQ. Residues 22-42 form a helical membrane-spanning segment; that stretch reads LVLVVVFVALLLDNMLFTVVV. Over 43–138 the chain is Lumenal, vesicle; that stretch reads PIVPTFLYDM…TGFLEEEITR (96 aa). N-linked (GlcNAc...) asparagine glycosylation is found at N58, N87, and N104. A helical membrane pass occupies residues 139 to 158; it reads VGVLFASKAVMQLLVNPFVG. Topologically, residues 159–167 are cytoplasmic; it reads PLTNRIGYH. A helical transmembrane segment spans residues 168-188; that stretch reads IPMFAGFVIMFLSTVMFAFSG. Residues 189–197 are Lumenal, vesicle-facing; sequence TYTLLFVAR. The helical transmembrane segment at 198–218 threads the bilayer; that stretch reads TLQGIGSSFSSVAGLGMLASV. The Cytoplasmic segment spans residues 219-227; it reads YTDDHERGR. A helical membrane pass occupies residues 228-250; that stretch reads AMGTALGGLALGLLVGAPFGSVM. Residues 251–256 lie on the Lumenal, vesicle side of the membrane; the sequence is YEFVGK. Residues 257–279 form a helical membrane-spanning segment; the sequence is SAPFLILAFLALLDGALQLCILQ. Over 280-299 the chain is Cytoplasmic; the sequence is PSKVSPESAKGTPLFMLLKD. A helical transmembrane segment spans residues 300–319; that stretch reads PYILVAAGSICFANMGVAIL. Residues 320-335 lie on the Lumenal, vesicle side of the membrane; the sequence is EPTLPIWMMQTMCSPK. A helical membrane pass occupies residues 336-360; sequence WQLGLAFLPASVSYLIGTNLFGVLA. At 361-365 the chain is on the cytoplasmic side; sequence NKMGR. A helical membrane pass occupies residues 366–386; sequence WLCSLIGMLVVGTSLLCVPLA. At 387–397 the chain is on the lumenal, vesicle side; it reads HNIFGLIGPNA. The chain crosses the membrane as a helical span at residues 398–418; sequence GLGLAIGMVDSSMMPIMGHLV. Topologically, residues 419-422 are cytoplasmic; that stretch reads DLRH. The chain crosses the membrane as a helical span at residues 423–443; the sequence is TSVYGSVYAIADVAFCMGFAI. Over 444–448 the chain is Lumenal, vesicle; sequence GPSTG. A helical membrane pass occupies residues 449–470; that stretch reads GAIVKAIGFPWLMVITGVINIV. At 471 to 525 the chain is on the cytoplasmic side; it reads YAPLCYYLRSPPAKEEKLAILSQDCPMETRMYATQKPTKEFPLGEDSDEEPDHEE. Positions 503–525 are disordered; the sequence is ATQKPTKEFPLGEDSDEEPDHEE. Residues 513 to 525 are compositionally biased toward acidic residues; it reads LGEDSDEEPDHEE.

Belongs to the major facilitator superfamily. Vesicular transporter family. Expressed primarily in neuroendocrine tissues. Highly expressed in chromaffin cells of the adrenal medulla (at protein level). Detected in peripheral sympathetic ganglia (at protein level). Found in some paracrine cells in stomach and duodenum (at protein level). Expressed in substantia nigra. As to expression, expressed in gastrointestinal tract.

It localises to the cytoplasmic vesicle. The protein resides in the secretory vesicle membrane. Its subcellular location is the secretory vesicle. The protein localises to the synaptic vesicle membrane. It is found in the endoplasmic reticulum membrane. It carries out the reaction serotonin(in) + 2 H(+)(out) = serotonin(out) + 2 H(+)(in). The enzyme catalyses (R)-noradrenaline(in) + 2 H(+)(out) = (R)-noradrenaline(out) + 2 H(+)(in). It catalyses the reaction dopamine(in) + 2 H(+)(out) = dopamine(out) + 2 H(+)(in). Its activity is regulated as follows. Strongly inhibited by reserpine. Also inhibited to a lesser extent by ketanserin and fenfluramine. Not significantly inhibited by tetrabenazine. Its function is as follows. Electrogenic antiporter that exchanges one cationic monoamine with two intravesicular protons across the membrane of secretory and synaptic vesicles. Uses the electrochemical proton gradient established by the V-type proton-pump ATPase to accumulate high concentrations of monoamines inside the vesicles prior to their release via exocytosis. Transports catecholamines and indolamines with higher affinity for serotonin. Regulates the transvesicular monoaminergic gradient that determines the quantal size. Mediates presynaptic monoaminergic vesicle transport in the amygdala and prefrontal brain regions related with emotion processing in response to environmental stimuli. In terms of biological role, unable to uptake serotonin. The polypeptide is Chromaffin granule amine transporter (SLC18A1) (Homo sapiens (Human)).